A 243-amino-acid polypeptide reads, in one-letter code: Orotidine 5'-phosphate decarboxylase (243 aa).

Substrate contacts are provided by residues aspartate 18, lysine 39, 66-75 (DLKFHDIPAT), threonine 130, arginine 192, glutamine 201, glycine 221, and arginine 222. Residue lysine 68 is the Proton donor of the active site.

The protein belongs to the OMP decarboxylase family. Type 1 subfamily. As to quaternary structure, homodimer.

The catalysed reaction is orotidine 5'-phosphate + H(+) = UMP + CO2. It participates in pyrimidine metabolism; UMP biosynthesis via de novo pathway; UMP from orotate: step 2/2. Catalyzes the decarboxylation of orotidine 5'-monophosphate (OMP) to uridine 5'-monophosphate (UMP). The sequence is that of Orotidine 5'-phosphate decarboxylase from Synechococcus sp. (strain WH7803).